Here is a 156-residue protein sequence, read N- to C-terminus: Cyanate hydratase (156 aa).

Catalysis depends on residues Arg-96, Glu-99, and Ser-122.

It belongs to the cyanase family.

The catalysed reaction is cyanate + hydrogencarbonate + 3 H(+) = NH4(+) + 2 CO2. Catalyzes the reaction of cyanate with bicarbonate to produce ammonia and carbon dioxide. The polypeptide is Cyanate hydratase (Pseudomonas putida (strain W619)).